The chain runs to 366 residues: Ribosomal RNA large subunit methyltransferase M (366 aa).

S-adenosyl-L-methionine-binding positions include serine 188, 221-224 (CPGG), aspartate 240, aspartate 260, and aspartate 277. The Proton acceptor role is filled by lysine 306.

Belongs to the class I-like SAM-binding methyltransferase superfamily. RNA methyltransferase RlmE family. RlmM subfamily. In terms of assembly, monomer.

It is found in the cytoplasm. The catalysed reaction is cytidine(2498) in 23S rRNA + S-adenosyl-L-methionine = 2'-O-methylcytidine(2498) in 23S rRNA + S-adenosyl-L-homocysteine + H(+). Functionally, catalyzes the 2'-O-methylation at nucleotide C2498 in 23S rRNA. This chain is Ribosomal RNA large subunit methyltransferase M, found in Photorhabdus asymbiotica subsp. asymbiotica (strain ATCC 43949 / 3105-77) (Xenorhabdus luminescens (strain 2)).